Here is a 1305-residue protein sequence, read N- to C-terminus: Contactin-associated protein like 5-3 (1305 aa).

The first 24 residues, 1-24 (MDSVPRLNSVFTLVLSGLWHFGLT), serve as a signal peptide directing secretion. The region spanning 25 to 174 (ATNYNCDDPL…IGMRVEVYGC (150 aa)) is the F5/8 type C domain. The Extracellular segment spans residues 25-1235 (ATNYNCDDPL…EPLTNAVPSD (1211 aa)). Laminin G-like domains are found at residues 180–360 (VADF…TFSC) and 367–544 (PITF…IDLC). Asn-282 carries an N-linked (GlcNAc...) asparagine glycan. A disulfide bond links Cys-329 and Cys-360. A glycan (N-linked (GlcNAc...) asparagine) is linked at Asn-496. Disulfide bonds link Cys-512–Cys-544, Cys-550–Cys-561, and Cys-555–Cys-570. The 38-residue stretch at 546 to 583 (IKDRCLPNYCEHGGQCAQTWTNFYCNCSDTGYTGATCH) folds into the EGF-like 1 domain. N-linked (GlcNAc...) asparagine glycosylation occurs at Asn-571. Residues Cys-572 and Cys-582 are joined by a disulfide bond. In terms of domain architecture, Fibrinogen C-terminal spans 584 to 790 (DSIYEQSCEV…LRCYGDRHFW (207 aa)). A Laminin G-like 3 domain is found at 791-956 (NAVSFSTEAS…KVTSGVRPGC (166 aa)). Disulfide bonds link Cys-929-Cys-956, Cys-960-Cys-973, Cys-967-Cys-982, and Cys-984-Cys-994. The EGF-like 2 domain maps to 957-995 (PGHCSSYGRNCQNGGKCVEKHIGYSCDCTNSPYEGPFCQ). Positions 1013–1198 (QEPYSVTKNT…VQRTLTESSC (186 aa)) constitute a Laminin G-like 4 domain. N-linked (GlcNAc...) asparagine glycans are attached at residues Asn-1023 and Asn-1057. The cysteines at positions 1163 and 1198 are disulfide-linked. The chain crosses the membrane as a helical span at residues 1236–1256 (LAVIGGIIAVVTFISFSVIGI). The Cytoplasmic portion of the chain corresponds to 1257-1305 (MTHFFYQHKRSHYASQMKEKEYPENVDSSSRNDIDLQNTTRECKQEDFI).

The protein belongs to the neurexin family. As to expression, expressed in brain.

It localises to the membrane. Its function is as follows. May play a role in the correct development and proper functioning of the peripheral and central nervous system and be involved in cell adhesion and intercellular communication. The protein is Contactin-associated protein like 5-3 (Cntnap5c) of Mus musculus (Mouse).